The chain runs to 436 residues: MGKPKKANVATIKNVNLEKQITEGRVAKNKNKDKVKLRAEESANIDARSSQKILAAAKLQQLELDEENFPSLVTVKKVNFSLNDGHVKEDEEVNETDLMADLDMDEDDVAAFERFQQPAQEGKRTLHLSKMIMQKIQEKEADIHTKISDEGSLKIEEIDPKVKEMYEGVRDVLKRYRSGKIPKAFKIIPKLRNWEQILFITEPHNWSAAAMFQGTRIFCSVLSQAMAQRFYNLVLLPRVRDDLCEYKKLNMHLYNALKRALFKPAAFMKGIILPLLEGGDCTLREAIIFGSVVARSSIPVLHSSACLLKICEMAYSGANSIFIRYFLDKRYALPYRVVDAAVFHFLRFENDKRELPVLWHQSLLTFAQRYKNDISSEQRDALLQLLKKKSHFKITPDVRRELQAASCRDVEMMETDNGLAGQPAKMYTDADVEYEG.

Phosphothreonine is present on Thr-145. 2 positions are modified to phosphoserine: Ser-148 and Ser-152.

Belongs to the bystin family.

It localises to the nucleus. Its subcellular location is the nucleolus. Functionally, required for processing of 20S pre-rRNA precursor and biogenesis of 40S ribosomal subunits. This chain is Bystin (bys), found in Drosophila melanogaster (Fruit fly).